A 217-amino-acid polypeptide reads, in one-letter code: Guanylate kinase (217 aa).

One can recognise a Guanylate kinase-like domain in the interval 10–190 (GLLIILSSPS…TEEALKTIIT (181 aa)). Residue 17-24 (SPSGAGKS) coordinates ATP.

Belongs to the guanylate kinase family.

It localises to the cytoplasm. It carries out the reaction GMP + ATP = GDP + ADP. Essential for recycling GMP and indirectly, cGMP. This is Guanylate kinase from Ruegeria sp. (strain TM1040) (Silicibacter sp.).